We begin with the raw amino-acid sequence, 352 residues long: uncharacterized protein (352 aa).

The transit peptide at 1-55 directs the protein to the chloroplast; sequence MAMAALTSSSSAITLLNKPFLPNRSSFFSSDSQSPLLRFSASTSVRSRFPSAAIS.

The protein belongs to the methyltransferase superfamily.

Its subcellular location is the plastid. The protein localises to the chloroplast. The protein resides in the plastoglobule. This is an uncharacterized protein from Arabidopsis thaliana (Mouse-ear cress).